Consider the following 292-residue polypeptide: MSNLTFFFDQLLSYSYLQQALTAAILVGIICGVIGCFIILRGMALMGDAISHAVLPGVVIAYMIGASFFIGAVITGVITALAIGYVSQNSRVKEDSAIGILFTAAFALGIVLITGMRGTGVDLWHILFGNVLAVSRTDLWVTLGIGLFVLLIIILFYRPLLLSTFDPVMAQATGIPVQMIHYLLMLLLSLVTVAALQTVGIVLVVAMLITPGATAYLLTNRLPVMLCLAAMFGVISAIAGIYFSVIYDVASGASIVLVASTLFALAFFFSPKQGVLTRYWRGKRAKEMSATS.

The next 8 membrane-spanning stretches (helical) occupy residues 20–40, 58–78, 96–116, 137–157, 168–188, 190–210, 226–246, and 249–269; these read ALTA…FIIL, VVIA…TGVI, SAIG…ITGM, TDLW…ILFY, VMAQ…MLLL, LVTV…MLIT, LCLA…FSVI, and VASG…AFFF.

It belongs to the ABC-3 integral membrane protein family.

It localises to the cell membrane. In terms of biological role, this protein is probably a component of a manganese permease, a binding protein-dependent, ATP-driven transport system. This chain is Manganese transport system membrane protein MntC (mntC), found in Halalkalibacterium halodurans (strain ATCC BAA-125 / DSM 18197 / FERM 7344 / JCM 9153 / C-125) (Bacillus halodurans).